The following is a 201-amino-acid chain: Potassium-transporting ATPase KdpC subunit (201 aa).

Residues 17 to 37 (LLTGLAYPLAMTGLAGILFPV) traverse the membrane as a helical segment.

This sequence belongs to the KdpC family. In terms of assembly, the system is composed of three essential subunits: KdpA, KdpB and KdpC.

Its subcellular location is the cell inner membrane. Part of the high-affinity ATP-driven potassium transport (or Kdp) system, which catalyzes the hydrolysis of ATP coupled with the electrogenic transport of potassium into the cytoplasm. This subunit acts as a catalytic chaperone that increases the ATP-binding affinity of the ATP-hydrolyzing subunit KdpB by the formation of a transient KdpB/KdpC/ATP ternary complex. The protein is Potassium-transporting ATPase KdpC subunit of Methylobacterium nodulans (strain LMG 21967 / CNCM I-2342 / ORS 2060).